The sequence spans 378 residues: Chaperone protein DnaJ (378 aa).

Residues D5–G70 enclose the J domain. The segment at G137 to S215 adopts a CR-type zinc-finger fold. 8 residues coordinate Zn(2+): C150, C153, C167, C170, C189, C192, C203, and C206. CXXCXGXG motif repeat units lie at residues C150 to G157, C167 to G174, C189 to G196, and C203 to G210.

The protein belongs to the DnaJ family. Homodimer. Requires Zn(2+) as cofactor.

It localises to the cytoplasm. In terms of biological role, participates actively in the response to hyperosmotic and heat shock by preventing the aggregation of stress-denatured proteins and by disaggregating proteins, also in an autonomous, DnaK-independent fashion. Unfolded proteins bind initially to DnaJ; upon interaction with the DnaJ-bound protein, DnaK hydrolyzes its bound ATP, resulting in the formation of a stable complex. GrpE releases ADP from DnaK; ATP binding to DnaK triggers the release of the substrate protein, thus completing the reaction cycle. Several rounds of ATP-dependent interactions between DnaJ, DnaK and GrpE are required for fully efficient folding. Also involved, together with DnaK and GrpE, in the DNA replication of plasmids through activation of initiation proteins. In Psychrobacter cryohalolentis (strain ATCC BAA-1226 / DSM 17306 / VKM B-2378 / K5), this protein is Chaperone protein DnaJ.